Here is a 599-residue protein sequence, read N- to C-terminus: Aspartate--tRNA ligase (599 aa).

L-aspartate is bound at residue Glu-180. Residues 204-207 (QIFK) are aspartate. Arg-226 is an L-aspartate binding site. Residues 226-228 (RDE) and Gln-235 contribute to the ATP site. His-454 lines the L-aspartate pocket. Residue Glu-488 coordinates ATP. Arg-495 is a binding site for L-aspartate. 540 to 543 (GLDR) is an ATP binding site.

This sequence belongs to the class-II aminoacyl-tRNA synthetase family. Type 1 subfamily. In terms of assembly, homodimer.

It localises to the cytoplasm. It carries out the reaction tRNA(Asp) + L-aspartate + ATP = L-aspartyl-tRNA(Asp) + AMP + diphosphate. In terms of biological role, catalyzes the attachment of L-aspartate to tRNA(Asp) in a two-step reaction: L-aspartate is first activated by ATP to form Asp-AMP and then transferred to the acceptor end of tRNA(Asp). In Clostridium botulinum (strain Eklund 17B / Type B), this protein is Aspartate--tRNA ligase.